Reading from the N-terminus, the 374-residue chain is uncharacterized protein (374 aa).

This is an uncharacterized protein from Methanocaldococcus jannaschii (strain ATCC 43067 / DSM 2661 / JAL-1 / JCM 10045 / NBRC 100440) (Methanococcus jannaschii).